We begin with the raw amino-acid sequence, 255 residues long: Leucyl/phenylalanyl-tRNA--protein transferase (255 aa).

This sequence belongs to the L/F-transferase family.

The protein localises to the cytoplasm. The catalysed reaction is N-terminal L-lysyl-[protein] + L-leucyl-tRNA(Leu) = N-terminal L-leucyl-L-lysyl-[protein] + tRNA(Leu) + H(+). It catalyses the reaction N-terminal L-arginyl-[protein] + L-leucyl-tRNA(Leu) = N-terminal L-leucyl-L-arginyl-[protein] + tRNA(Leu) + H(+). The enzyme catalyses L-phenylalanyl-tRNA(Phe) + an N-terminal L-alpha-aminoacyl-[protein] = an N-terminal L-phenylalanyl-L-alpha-aminoacyl-[protein] + tRNA(Phe). Its function is as follows. Functions in the N-end rule pathway of protein degradation where it conjugates Leu, Phe and, less efficiently, Met from aminoacyl-tRNAs to the N-termini of proteins containing an N-terminal arginine or lysine. The polypeptide is Leucyl/phenylalanyl-tRNA--protein transferase (Polaromonas sp. (strain JS666 / ATCC BAA-500)).